A 475-amino-acid polypeptide reads, in one-letter code: Ubiquitin carboxyl-terminal hydrolase calypso (475 aa).

One can recognise a UCH catalytic domain in the interval 44 to 275; the sequence is GWLELESDPG…IRFNLMAVVP (232 aa). C130 serves as the catalytic Nucleophile. The active-site Proton donor is the H212. The stretch at 333 to 360 forms a coiled coil; the sequence is AKDLQLLLKNLDTEIAINEQNLADENDR. Residues 374–402 form the ULD domain; that stretch reads NYDKFICTFLSMLAHQGVLGELVSQHLLP. The positively charged C-terminal tail required for binding nucleosomes stretch occupies residues 404–475; the sequence is KKVSGQSAAN…KGRNKCRKRK (72 aa). Positions 411–475 are disordered; that stretch reads AANRISKQNS…KGRNKCRKRK (65 aa). Residues 419 to 460 show a composition bias toward low complexity; it reads NSAASSAGANAGAAAGVTPKSQQQQQQPQTAASKNGKSPGKT. Basic residues predominate over residues 461–475; it reads PGRRRKGRNKCRKRK.

Belongs to the peptidase C12 family. BAP1 subfamily. In terms of assembly, catalytic component of the polycomb repressive deubiquitinase (PR-DUB) complex, at least composed of caly/calypso, Asx and sba (MBD5/6 homolog). The PR-DUB complex associates with nucleosomes to mediate deubiquitination of histone H2AK118ub1 substrates; the association requires the positively charged C-terminal tail of caly, probably due to direct binding of DNA. Interacts (via ULD domain) with Asx (via DEUBAD domain); the interaction produces a stable heterodimer with a composite binding site for ubiquitin. Homodimerizes (via coiled-coil hinge-region between the UCH and ULD domains) to mediate assembly of 2 copies of the caly-Asx heterodimer into a bisymmetric tetramer; dimerization enhances PR-DUB association with nucleosomes.

It localises to the nucleus. The enzyme catalyses Thiol-dependent hydrolysis of ester, thioester, amide, peptide and isopeptide bonds formed by the C-terminal Gly of ubiquitin (a 76-residue protein attached to proteins as an intracellular targeting signal).. Functionally, catalytic component of the polycomb repressive deubiquitinase (PR-DUB) complex, a complex that specifically mediates deubiquitination of histone H2A monoubiquitinated at 'Lys-119' (H2AK118ub1). Mediates bisymmetric organization of the PR-DUB complex and is involved in association with nucleosomes to mediate deubiquitination. Does not deubiquitinate monoubiquitinated histone H2B. Required to maintain the transcriptionally repressive state of homeotic genes throughout development. The PR-DUB complex has weak or no activity toward 'Lys-48'- and 'Lys-63'-linked polyubiquitin chains. Polycomb group (PcG) protein. This Drosophila persimilis (Fruit fly) protein is Ubiquitin carboxyl-terminal hydrolase calypso.